The sequence spans 698 residues: Protein artemis (698 aa).

Position 380 is a phosphothreonine (T380). The residue at position 385 (S385) is a Phosphoserine. 3 disordered regions span residues A445–V485, L505–S595, and N620–P669. A compositionally biased stretch (acidic residues) spans D449–L461. The span at L508–K521 shows a compositional bias: polar residues. Positions T538–I551 are enriched in low complexity. A compositionally biased stretch (polar residues) spans T552 to K583. Over residues T641–D655 the composition is skewed to low complexity. S650 carries the phosphoserine; by ATM modification.

Belongs to the DNA repair metallo-beta-lactamase (DRMBL) family. Interacts with LIG4; the interaction is direct. Interacts with ATM. Interacts with BRCA1. Interacts with PRKDC. Interacts with TP53BP1. Also exhibits ATM- and phosphorylation-dependent interaction with the MRN complex, composed of MRE11, RAD50, and NBN. Phosphorylation on undefined residues by PRKDC may stimulate endonucleolytic activity on 5' and 3' hairpins and overhangs. PRKDC must remain present, even after phosphorylation, for efficient hairpin opening. Also phosphorylated by ATM in response to ionizing radiation (IR) and by ATR in response to ultraviolet (UV) radiation.

It localises to the nucleus. In terms of biological role, required for V(D)J recombination, the process by which exons encoding the antigen-binding domains of immunoglobulins and T-cell receptor proteins are assembled from individual V, (D), and J gene segments. V(D)J recombination is initiated by the lymphoid specific RAG endonuclease complex, which generates site specific DNA double strand breaks (DSBs). These DSBs present two types of DNA end structures: hairpin sealed coding ends and phosphorylated blunt signal ends. These ends are independently repaired by the non homologous end joining (NHEJ) pathway to form coding and signal joints respectively. This protein exhibits single-strand specific 5'-3' exonuclease activity in isolation, and acquires endonucleolytic activity on 5' and 3' hairpins and overhangs when in a complex with PRKDC. The latter activity is required specifically for the resolution of closed hairpins prior to the formation of the coding joint. May also be required for the repair of complex DSBs induced by ionizing radiation, which require substantial end-processing prior to religation by NHEJ. This Rattus norvegicus (Rat) protein is Protein artemis (Dclre1c).